The chain runs to 229 residues: 2,3-bisphosphoglycerate-dependent phosphoglycerate mutase (229 aa).

Substrate is bound by residues 7–14 (RHGQSEWN), 20–21 (TG), arginine 59, 86–89 (ERHY), lysine 97, 113–114 (RR), and 182–183 (GN). Histidine 8 serves as the catalytic Tele-phosphohistidine intermediate. Glutamate 86 (proton donor/acceptor) is an active-site residue.

It belongs to the phosphoglycerate mutase family. BPG-dependent PGAM subfamily.

It catalyses the reaction (2R)-2-phosphoglycerate = (2R)-3-phosphoglycerate. Its pathway is carbohydrate degradation; glycolysis; pyruvate from D-glyceraldehyde 3-phosphate: step 3/5. Functionally, catalyzes the interconversion of 2-phosphoglycerate and 3-phosphoglycerate. In Listeria welshimeri serovar 6b (strain ATCC 35897 / DSM 20650 / CCUG 15529 / CIP 8149 / NCTC 11857 / SLCC 5334 / V8), this protein is 2,3-bisphosphoglycerate-dependent phosphoglycerate mutase.